A 158-amino-acid chain; its full sequence is RNA pyrophosphohydrolase (158 aa).

Residues 9 to 151 (PLRNGVGIVV…KLHVYKDVKE (143 aa)) enclose the Nudix hydrolase domain. A Nudix box motif is present at residues 43–64 (GGVDKGEDYLTAAYRELEEETS).

It belongs to the Nudix hydrolase family. RppH subfamily. It depends on a divalent metal cation as a cofactor.

Its function is as follows. Accelerates the degradation of transcripts by removing pyrophosphate from the 5'-end of triphosphorylated RNA, leading to a more labile monophosphorylated state that can stimulate subsequent ribonuclease cleavage. The sequence is that of RNA pyrophosphohydrolase from Pelagibacter ubique (strain HTCC1062).